The sequence spans 329 residues: Ankyrin repeat and SOCS box protein 5 (329 aa).

6 ANK repeats span residues A69–A98, D102–A131, D135–L164, C167–Q196, H200–K229, and Y232–A261. The SOCS box domain occupies M278 to R329.

This sequence belongs to the ankyrin SOCS box (ASB) family.

Its pathway is protein modification; protein ubiquitination. In terms of biological role, may be a substrate-recognition component of a SCF-like ECS (Elongin-Cullin-SOCS-box protein) E3 ubiquitin-protein ligase complex which mediates the ubiquitination and subsequent proteasomal degradation of target proteins. May play a role in the initiation of arteriogenesis. The chain is Ankyrin repeat and SOCS box protein 5 (ASB5) from Homo sapiens (Human).